Reading from the N-terminus, the 122-residue chain is Large ribosomal subunit protein uL14 (122 aa).

Belongs to the universal ribosomal protein uL14 family. In terms of assembly, part of the 50S ribosomal subunit. Forms a cluster with proteins L3 and L19. In the 70S ribosome, L14 and L19 interact and together make contacts with the 16S rRNA in bridges B5 and B8.

In terms of biological role, binds to 23S rRNA. Forms part of two intersubunit bridges in the 70S ribosome. This is Large ribosomal subunit protein uL14 from Acinetobacter baumannii (strain AB307-0294).